A 250-amino-acid polypeptide reads, in one-letter code: 2,3-bisphosphoglycerate-dependent phosphoglycerate mutase (250 aa).

Residues 10-17 (RHGESQWN), 23-24 (TG), Arg62, 89-92 (ERHY), Lys100, 116-117 (RR), and 185-186 (GN) each bind substrate. The active-site Tele-phosphohistidine intermediate is the His11. Glu89 (proton donor/acceptor) is an active-site residue.

Belongs to the phosphoglycerate mutase family. BPG-dependent PGAM subfamily. As to quaternary structure, homodimer.

It carries out the reaction (2R)-2-phosphoglycerate = (2R)-3-phosphoglycerate. The protein operates within carbohydrate degradation; glycolysis; pyruvate from D-glyceraldehyde 3-phosphate: step 3/5. Its function is as follows. Catalyzes the interconversion of 2-phosphoglycerate and 3-phosphoglycerate. This is 2,3-bisphosphoglycerate-dependent phosphoglycerate mutase from Serratia proteamaculans (strain 568).